We begin with the raw amino-acid sequence, 143 residues long: Small ribosomal subunit protein uS9 (143 aa).

A disordered region spans residues 118-143 (DSRRTEPHKPNRSTKGPRAKRQKSYR). Positions 127–143 (PNRSTKGPRAKRQKSYR) are enriched in basic residues.

It belongs to the universal ribosomal protein uS9 family.

The chain is Small ribosomal subunit protein uS9 from Thermococcus sibiricus (strain DSM 12597 / MM 739).